Here is an 87-residue protein sequence, read N- to C-terminus: NADH-ubiquinone oxidoreductase chain 4L (87 aa).

The next 2 membrane-spanning stretches (helical) occupy residues 22 to 42 (FLSF…FIIG) and 49 to 69 (LFLI…SLLV).

The protein belongs to the complex I subunit 4L family.

It is found in the mitochondrion membrane. The catalysed reaction is a ubiquinone + NADH + 5 H(+)(in) = a ubiquinol + NAD(+) + 4 H(+)(out). Core subunit of the mitochondrial membrane respiratory chain NADH dehydrogenase (Complex I) that is believed to belong to the minimal assembly required for catalysis. Complex I functions in the transfer of electrons from NADH to the respiratory chain. The immediate electron acceptor for the enzyme is believed to be ubiquinone. The chain is NADH-ubiquinone oxidoreductase chain 4L (ND4L) from Apis mellifera ligustica (Common honeybee).